Consider the following 465-residue polypeptide: MILAIISLSVVICREVSDYIVMFDQDPSMDRASMKVLYNMNIHEAQNILRPDESIGIKMTNGFVARMSESTAERMKRHPSVKMVVKDSPVGISGLKFDVPGSDDRSGIVMQRHAPWGLARVGGSVSLVHGNYCYPINSGKGVDVYVLDTGVEIEHPEFGGRARWGANFVPKSPDRDEHGHGTHCAGVIGGKNFGVTKESSIIAVKVLDKYGSGMTSRLLQGVDFVIKEHEKKKDELYNAAADEYLSSGGSSDIEIEMDGSESFSFVQPETPSIQRLVDAISRKALQPKTVVNLSVGGFRNAALNFAIEYASRLGIHFSTAAGNEHEDACDFSPGSSRAAITTGASTYRDTVAFFSNFGKCVNVFAPGVDILSSWIGGTQKIVSGTSMAAPHTSGAIAAYLTYYDYDPHMLKSRIIGDARLIEDVSEDDYDGTTIWPLPSLFNANKKKLPILSMERLLRRVRNKMR.

The N-terminal stretch at 1-17 (MILAIISLSVVICREVS) is a signal peptide. The region spanning 19 to 90 (YIVMFDQDPS…VKMVVKDSPV (72 aa)) is the Inhibitor I9 domain. The region spanning 115–447 (PWGLARVGGS…PSLFNANKKK (333 aa)) is the Peptidase S8 domain. Residues D148 and H180 each act as charge relay system in the active site. A disulfide bond links C329 and C360. Residue S386 is the Charge relay system of the active site.

The protein belongs to the peptidase S8 family.

It is found in the secreted. The protein localises to the extracellular space. Functionally, may be involved in the degradation of proteins for nutrient acquisition or possess a regulatory function by proteolytic activation of proproteins. The chain is Putative subtilisin-like proteinase 1 (SPL1) from Encephalitozoon cuniculi (strain GB-M1) (Microsporidian parasite).